The primary structure comprises 426 residues: Proline--tRNA ligase (426 aa).

Belongs to the class-II aminoacyl-tRNA synthetase family. ProS type 2 subfamily. As to quaternary structure, homodimer.

It localises to the cytoplasm. The enzyme catalyses tRNA(Pro) + L-proline + ATP = L-prolyl-tRNA(Pro) + AMP + diphosphate. In terms of biological role, catalyzes the attachment of proline to tRNA(Pro) in a two-step reaction: proline is first activated by ATP to form Pro-AMP and then transferred to the acceptor end of tRNA(Pro). This chain is Proline--tRNA ligase, found in Rickettsia peacockii (strain Rustic).